A 289-amino-acid chain; its full sequence is Digeranylgeranylglyceryl phosphate synthase (289 aa).

A run of 8 helical transmembrane segments spans residues 17 to 37 (CLMAGFAAIIGTLIAFNILTS), 50 to 70 (LFSSVLIFLAVFLVAGAGNAI), 106 to 126 (FALGTLLAFSINPICGVIALF), 141 to 161 (TPLLGNLSIGYLTGSSFLFGA), 163 to 183 (VFGLEGLKALFVLFLLAALAI), 221 to 241 (LIGFLAVIFSPLPYHLSMLGL), 243 to 263 (YLYLVLLADLGFLAAIYQLLA), and 269 to 289 (KSSKMFKIAMFFALIAFIAGV).

Belongs to the UbiA prenyltransferase family. DGGGP synthase subfamily. Requires Mg(2+) as cofactor.

It localises to the cell membrane. The enzyme catalyses sn-3-O-(geranylgeranyl)glycerol 1-phosphate + (2E,6E,10E)-geranylgeranyl diphosphate = 2,3-bis-O-(geranylgeranyl)-sn-glycerol 1-phosphate + diphosphate. It functions in the pathway membrane lipid metabolism; glycerophospholipid metabolism. In terms of biological role, prenyltransferase that catalyzes the transfer of the geranylgeranyl moiety of geranylgeranyl diphosphate (GGPP) to the C2 hydroxyl of (S)-3-O-geranylgeranylglyceryl phosphate (GGGP). This reaction is the second ether-bond-formation step in the biosynthesis of archaeal membrane lipids. This chain is Digeranylgeranylglyceryl phosphate synthase, found in Methanosarcina barkeri (strain Fusaro / DSM 804).